A 313-amino-acid polypeptide reads, in one-letter code: D-alanine--D-alanine ligase (313 aa).

The ATP-grasp domain maps to 108–308; it reads KLVWQQTGVP…YSELVVKVLS (201 aa). Position 138-193 (138-193) interacts with ATP; that stretch reads VAKLGLPLFVKPASEGSSVAVLKVKTADALPAALAEAATHDKIVIVEKSIEGGGEY. Mg(2+) contacts are provided by Asp262, Glu275, and Asn277.

This sequence belongs to the D-alanine--D-alanine ligase family. It depends on Mg(2+) as a cofactor. The cofactor is Mn(2+).

The protein localises to the cytoplasm. The enzyme catalyses 2 D-alanine + ATP = D-alanyl-D-alanine + ADP + phosphate + H(+). It functions in the pathway cell wall biogenesis; peptidoglycan biosynthesis. Functionally, cell wall formation. The sequence is that of D-alanine--D-alanine ligase from Burkholderia cenocepacia (strain HI2424).